Here is a 247-residue protein sequence, read N- to C-terminus: tRNA uridine(34) hydroxylase (247 aa).

Residues 124 to 218 enclose the Rhodanese domain; sequence TKQDVIVIDT…YLEDTQNKNN (95 aa). The Cysteine persulfide intermediate role is filled by cysteine 178.

This sequence belongs to the TrhO family.

The catalysed reaction is uridine(34) in tRNA + AH2 + O2 = 5-hydroxyuridine(34) in tRNA + A + H2O. Functionally, catalyzes oxygen-dependent 5-hydroxyuridine (ho5U) modification at position 34 in tRNAs. This Rickettsia africae (strain ESF-5) protein is tRNA uridine(34) hydroxylase.